A 120-amino-acid chain; its full sequence is Myohemerythrin (120 aa).

Residues His26, His56, Glu60, His75, His79, His108, and Asp113 each contribute to the Fe cation site.

The protein belongs to the hemerythrin family.

In terms of biological role, myohemerythrin is an oxygen-binding protein found in the retractor muscles of certain worms. The oxygen-binding site contains two iron atoms. This Sipunculus nudus (Sipunculan worm) protein is Myohemerythrin.